The primary structure comprises 353 residues: Melatonin receptor type 1A (353 aa).

Over 1 to 32 (MKGNVSELLNATQQAPGGGEGGRPRPSWLAST) the chain is Extracellular. N-linked (GlcNAc...) asparagine glycans are attached at residues Asn-4 and Asn-10. Residues 33-53 (LAFILIFTIVVDILGNLLVIL) traverse the membrane as a helical segment. Residues 54 to 66 (SVYRNKKLRNSGN) are Cytoplasmic-facing. The helical transmembrane segment at 67-87 (IFVVSLAVADLVVAVYPYPLV) threads the bilayer. Over 88-105 (LTSILNNGWNLGYLHCQV) the chain is Extracellular. Cys-103 and Cys-180 form a disulfide bridge. The helical transmembrane segment at 106–126 (SAFLMGLSVIGSIFNITGIAM) threads the bilayer. The Cytoplasmic portion of the chain corresponds to 127-145 (NRYCYICHSLKYDKIYSNK). The helical transmembrane segment at 146-166 (NSLCYVFLIWMLTLIAIMPNL) threads the bilayer. Over 167–190 (QTGTLQYDPRIYSCTFTQSVSSAY) the chain is Extracellular. The helical transmembrane segment at 191–211 (TIAVVVFHFIVPMIIVIFCYL) threads the bilayer. Residues 212-243 (RIWVLVLQVRRRVKPDNKPKLKPQDFRNFVTM) are Cytoplasmic-facing. A helical transmembrane segment spans residues 244–264 (FVVFVLFAICWAPLNLIGLIV). Residues 265–277 (ASDPATMVPRIPE) lie on the Extracellular side of the membrane. The helical transmembrane segment at 278-298 (WLFVASYYLAYFNSCLNAIIY) threads the bilayer. Topologically, residues 299 to 353 (GLLNQNFRKEYKKIIVSLCTAKMFFVESSNEEADKIKCKPSPLIPNNNLIKVDSV) are cytoplasmic.

This sequence belongs to the G-protein coupled receptor 1 family.

The protein resides in the cell membrane. In terms of biological role, high affinity receptor for melatonin. Likely to mediate the reproductive and circadian actions of melatonin. The activity of this receptor is mediated by pertussis toxin sensitive G proteins that inhibit adenylate cyclase activity. Possibly involved in sleep induction, by melatonin activation of the potassium channel KCNMA1/BK and the dissociation of G-beta and G-gamma subunits, thereby decreasing synaptic transmission. The polypeptide is Melatonin receptor type 1A (Mtnr1a) (Mus musculus (Mouse)).